We begin with the raw amino-acid sequence, 957 residues long: AP2-associated protein kinase 1 (957 aa).

Met1 is modified (N-acetylmethionine). Basic and acidic residues predominate over residues 1–11 (MKKFFDSRREQ). The disordered stretch occupies residues 1 to 25 (MKKFFDSRREQGGSGLGSGSSGGGG). A compositionally biased stretch (gly residues) spans 12–25 (GGSGLGSGSSGGGG). Ser14 is modified (phosphoserine). The Protein kinase domain occupies 46 to 315 (VTVDEVLAEG…QVSYFSFKLL (270 aa)). ATP-binding positions include 52–60 (LAEGGFAIV) and Lys74. Asp176 functions as the Proton acceptor in the catalytic mechanism. Tyr234 carries the phosphotyrosine modification. Ser235 is subject to Phosphoserine. Disordered stretches follow at residues 326-506 (NSPI…AVHP) and 563-629 (TAAA…AGHR). A phosphothreonine mark is found at Thr354 and Thr389. An Omega-N-methylarginine modification is found at Arg391. Pro residues predominate over residues 436-448 (PQAPPTSQQPPSA). Position 441 is a phosphothreonine (Thr441). Composition is skewed to low complexity over residues 449 to 506 (PAQA…AVHP) and 563 to 601 (TAAA…KVQT). At Thr602 the chain carries Phosphothreonine. Residues 607–617 (IQGQKLGSLTP) are compositionally biased toward polar residues. Ser614 is modified (phosphoserine). A Phosphothreonine modification is found at Thr616. Ser619, Ser620, Ser633, and Ser646 each carry phosphoserine. Position 649 is a phosphothreonine (Thr649). The interval 660 to 697 (SLNKSKSATTTPSGSPRASQQNVYNPSEGSTWNPFDDD) is disordered. The span at 668 to 692 (TTTPSGSPRASQQNVYNPSEGSTWN) shows a compositional bias: polar residues. Residue Tyr683 is modified to Phosphotyrosine. 4 positions are modified to phosphoserine: Ser727, Ser842, Ser933, and Ser934. Positions 819–956 (EKADVAVESL…SLLLVDQLID (138 aa)) are clathrin-binding domain (CBD). 2 disordered regions span residues 832 to 855 (LEPP…TDSL) and 919 to 941 (VLIT…ESSL). Residues 840-855 (LPSQTESVTSNRTDSL) show a composition bias toward polar residues. Residues 927–940 (GGHSRNSSGSSESS) show a composition bias toward low complexity.

This sequence belongs to the protein kinase superfamily. Ser/Thr protein kinase family. As to quaternary structure, interacts (via CBD domain) with clathrin. Interacts with AP-2 complex. Interacts with NUMB. Interacts with alpha-adaptin. Interacts with EPS15 isoform 2. Interacts with membrane-bound activated NOTCH1 but not with the inactive full-length form of NOTCH1. Preferentially interacts with monoubiquitinated activated NOTCH1 compared to the non-ubiquitinated form. In terms of processing, autophosphorylated. Detected in brain (at protein level).

The protein localises to the cell membrane. It localises to the membrane. It is found in the clathrin-coated pit. The protein resides in the presynapse. The enzyme catalyses L-seryl-[protein] + ATP = O-phospho-L-seryl-[protein] + ADP + H(+). The catalysed reaction is L-threonyl-[protein] + ATP = O-phospho-L-threonyl-[protein] + ADP + H(+). Stimulated by clathrin. Regulates clathrin-mediated endocytosis by phosphorylating the AP2M1/mu2 subunit of the adaptor protein complex 2 (AP-2) which ensures high affinity binding of AP-2 to cargo membrane proteins during the initial stages of endocytosis. Preferentially, may phosphorylate substrates on threonine residues. Regulates phosphorylation of other AP-2 subunits as well as AP-2 localization and AP-2-mediated internalization of ligand complexes. Phosphorylates NUMB and regulates its cellular localization, promoting NUMB localization to endosomes. Binds to and stabilizes the activated form of NOTCH1, increases its localization in endosomes and regulates its transcriptional activity. The protein is AP2-associated protein kinase 1 (AAK1) of Bos taurus (Bovine).